The chain runs to 622 residues: Signal recognition particle subunit SRP68 (622 aa).

Positions arginine 576–lysine 622 are disordered. Over residues lysine 585–lysine 595 the composition is skewed to low complexity.

Belongs to the SRP68 family. Heterodimer with srpa-72. Srpa-68/srpa-72 heterodimer formation is stabilized by the presence of 7SL RNA. Component of a signal recognition particle (SRP) complex that consists of a 7SL RNA molecule of 300 nucleotides and six protein subunits: srpa-72, srpa-68, SRP54, F37F2.2/SRP19, F25G6.8/SRP14 and ZK512.4/SRP9. Within the SRP complex, interacts (via C-terminus) with srpa-72 (via N-terminus).

It localises to the cytoplasm. Its subcellular location is the nucleus. The protein resides in the nucleolus. It is found in the endoplasmic reticulum. Component of the signal recognition particle (SRP) complex, a ribonucleoprotein complex that mediates the cotranslational targeting of secretory and membrane proteins to the endoplasmic reticulum (ER). The SRP complex interacts with the signal sequence in nascent secretory and membrane proteins and directs them to the membrane of the ER. The SRP complex targets the ribosome-nascent chain complex to the SRP receptor (SR), which is anchored in the ER, where SR compaction and GTPase rearrangement drive cotranslational protein translocation into the ER. Binds the signal recognition particle RNA (7SL RNA), srpa-72 binds to this complex subsequently. The SRP complex possibly participates in the elongation arrest function. The sequence is that of Signal recognition particle subunit SRP68 from Caenorhabditis elegans.